The chain runs to 162 residues: MTRIIGLDPGMSKTGWAIIDMDERSNIEFLGSGTISTGNKLGMGERLHVIFEQLKKVISLYSPSEAAIEKIFVNKNPKSSLTLGYARGIVILVLEITELTMNEYDTNYVKKSITGNGHADKDQVIFMVKQIIKNLNIKCHHAADALAVAICHVYTKSSYFVR.

Residues Asp-8, Glu-69, and His-141 contribute to the active site. 3 residues coordinate Mg(2+): Asp-8, Glu-69, and His-141.

This sequence belongs to the RuvC family. Homodimer which binds Holliday junction (HJ) DNA. The HJ becomes 2-fold symmetrical on binding to RuvC with unstacked arms; it has a different conformation from HJ DNA in complex with RuvA. In the full resolvosome a probable DNA-RuvA(4)-RuvB(12)-RuvC(2) complex forms which resolves the HJ. Mg(2+) serves as cofactor.

The protein localises to the cytoplasm. It catalyses the reaction Endonucleolytic cleavage at a junction such as a reciprocal single-stranded crossover between two homologous DNA duplexes (Holliday junction).. Its function is as follows. The RuvA-RuvB-RuvC complex processes Holliday junction (HJ) DNA during genetic recombination and DNA repair. Endonuclease that resolves HJ intermediates. Cleaves cruciform DNA by making single-stranded nicks across the HJ at symmetrical positions within the homologous arms, yielding a 5'-phosphate and a 3'-hydroxyl group; requires a central core of homology in the junction. The consensus cleavage sequence is 5'-(A/T)TT(C/G)-3'. Cleavage occurs on the 3'-side of the TT dinucleotide at the point of strand exchange. HJ branch migration catalyzed by RuvA-RuvB allows RuvC to scan DNA until it finds its consensus sequence, where it cleaves and resolves the cruciform DNA. This chain is Crossover junction endodeoxyribonuclease RuvC, found in Wolbachia sp. subsp. Brugia malayi (strain TRS).